A 1081-amino-acid polypeptide reads, in one-letter code: Inversin (1081 aa).

ANK repeat units lie at residues 13-42, 47-76, 80-110, 113-144, 148-177, 181-213, 220-250, 254-283, 288-317, 321-350, 356-385, 389-418, 422-451, 455-484, 488-517, and 523-553; these read SLAS…ALKD, FGRT…DVNK, SQRT…WMQK, EEMT…EVDT, NKQT…NIGI, EGKI…TESL, EGRT…NITS, LFRT…SGTI, QGAT…VKDD, EGRT…DIDI, YGGT…QVDA, MKHT…RVDL, DGHS…NPNV, AGRT…DPNI, EGRT…FPNQ, and ERYT…SIAA. Asn75 is subject to 3-hydroxyasparagine. Residues 490-498 carry the D-box 1 motif; sequence RTALHWSCN. An IQ 1 domain is found at 555–584; it reads QDIAAFKIQAVYKGYKVRKAFRDRKNLLMK. The segment covering 589-610 has biased composition (basic and acidic residues); that stretch reads RKDAAAKKREEENKRREAEQQK. The interval 589–889 is disordered; that stretch reads RKDAAAKKRE…PAPGPLSGQS (301 aa). Residues 638–649 are compositionally biased toward polar residues; it reads RAPSKQPPSSEA. 3 stretches are compositionally biased toward basic and acidic residues: residues 688-698, 724-740, and 772-785; these read KPNESPREQCK, EKSR…DKGK, and DGHR…DTAS. A compositionally biased stretch (polar residues) spans 863–872; it reads SGTSTLSEDA. A D-box 2 motif is present at residues 910–918; it reads RKELFRKKN. Positions 917–946 constitute an IQ 2 domain; it reads KNKAAAVIQRAWRSYQLRKHLSHLLHMKEL. An ANK 17 repeat occupies 1022–1050; it reads RTHSVLHLNSVSNLQCIHLLENSGRSKNF. The segment covering 1051–1061 has biased composition (polar residues); the sequence is SYNLQSATPPK. Positions 1051 to 1081 are disordered; sequence SYNLQSATPPKTKTKLRPSLEEECVRGSWNS.

In terms of assembly, binds calmodulin via its IQ domains. Interacts with APC2. Interacts with alpha-, beta-, and gamma-catenin. Interacts with N-cadherin (CDH2). Interacts with NPHP1. Interacts with DVL1, PRICKLE (PRICKLE1 or PRICKLE2) and Strabismus (VANGL1 or VANGL2). Component of a complex containing at least ANKS6, INVS, NEK8 and NPHP3. ANKS6 may organize complex assembly by linking INVS and NPHP3 to NEK8 and INVS may target the complex to the proximal ciliary axoneme. Interacts with IQCB1; the interaction likely requires additional interactors. Interacts with microtubules. In terms of processing, may be ubiquitinated via its interaction with APC2. Post-translationally, hydroxylated at Asn-75, most probably by HIF1AN.

The protein resides in the cytoplasm. It localises to the cytoskeleton. Its subcellular location is the membrane. It is found in the spindle. The protein localises to the nucleus. Functionally, required for normal renal development and establishment of left-right axis. Probably acts as a molecular switch between different Wnt signaling pathways. Inhibits the canonical Wnt pathway by targeting cytoplasmic disheveled (DVL1) for degradation by the ubiquitin-proteasome. This suggests that it is required in renal development to oppose the repression of terminal differentiation of tubular epithelial cells by Wnt signaling. Involved in the organization of apical junctions in kidney cells together with NPHP1, NPHP4 and RPGRIP1L/NPHP8. Does not seem to be strictly required for ciliogenesis. In Canis lupus familiaris (Dog), this protein is Inversin (INVS).